We begin with the raw amino-acid sequence, 90 residues long: Cell division topological specificity factor (90 aa).

It belongs to the MinE family.

Its function is as follows. Prevents the cell division inhibition by proteins MinC and MinD at internal division sites while permitting inhibition at polar sites. This ensures cell division at the proper site by restricting the formation of a division septum at the midpoint of the long axis of the cell. In Clostridium perfringens (strain ATCC 13124 / DSM 756 / JCM 1290 / NCIMB 6125 / NCTC 8237 / Type A), this protein is Cell division topological specificity factor.